The primary structure comprises 285 residues: Phosphatidylserine decarboxylase proenzyme (285 aa).

Catalysis depends on charge relay system; for autoendoproteolytic cleavage activity residues D96, H152, and S250. Residue S250 is the Schiff-base intermediate with substrate; via pyruvic acid; for decarboxylase activity of the active site. At S250 the chain carries Pyruvic acid (Ser); by autocatalysis.

Belongs to the phosphatidylserine decarboxylase family. PSD-B subfamily. Prokaryotic type I sub-subfamily. In terms of assembly, heterodimer of a large membrane-associated beta subunit and a small pyruvoyl-containing alpha subunit. It depends on pyruvate as a cofactor. Post-translationally, is synthesized initially as an inactive proenzyme. Formation of the active enzyme involves a self-maturation process in which the active site pyruvoyl group is generated from an internal serine residue via an autocatalytic post-translational modification. Two non-identical subunits are generated from the proenzyme in this reaction, and the pyruvate is formed at the N-terminus of the alpha chain, which is derived from the carboxyl end of the proenzyme. The autoendoproteolytic cleavage occurs by a canonical serine protease mechanism, in which the side chain hydroxyl group of the serine supplies its oxygen atom to form the C-terminus of the beta chain, while the remainder of the serine residue undergoes an oxidative deamination to produce ammonia and the pyruvoyl prosthetic group on the alpha chain. During this reaction, the Ser that is part of the protease active site of the proenzyme becomes the pyruvoyl prosthetic group, which constitutes an essential element of the active site of the mature decarboxylase.

It is found in the cell membrane. It catalyses the reaction a 1,2-diacyl-sn-glycero-3-phospho-L-serine + H(+) = a 1,2-diacyl-sn-glycero-3-phosphoethanolamine + CO2. The protein operates within phospholipid metabolism; phosphatidylethanolamine biosynthesis; phosphatidylethanolamine from CDP-diacylglycerol: step 2/2. Its function is as follows. Catalyzes the formation of phosphatidylethanolamine (PtdEtn) from phosphatidylserine (PtdSer). This chain is Phosphatidylserine decarboxylase proenzyme, found in Acinetobacter baylyi (strain ATCC 33305 / BD413 / ADP1).